Here is a 663-residue protein sequence, read N- to C-terminus: Translation factor GUF1, mitochondrial (663 aa).

The N-terminal 37 residues, 1–37 (MRGCLQSVRLLTTALGQSPRRPLPFAFRLPPNASRLF), are a transit peptide targeting the mitochondrion. The tr-type G domain maps to 65 to 245 (ERYRNFCIVA…TIVEQIPAPI (181 aa)). Residues 74 to 81 (AHVDHGKS), 138 to 142 (DTPGH), and 192 to 195 (NKVD) contribute to the GTP site.

This sequence belongs to the TRAFAC class translation factor GTPase superfamily. Classic translation factor GTPase family. LepA subfamily.

It localises to the mitochondrion inner membrane. The enzyme catalyses GTP + H2O = GDP + phosphate + H(+). Functionally, promotes mitochondrial protein synthesis. May act as a fidelity factor of the translation reaction, by catalyzing a one-codon backward translocation of tRNAs on improperly translocated ribosomes. Binds to mitochondrial ribosomes in a GTP-dependent manner. The protein is Translation factor GUF1, mitochondrial of Uncinocarpus reesii (strain UAMH 1704).